We begin with the raw amino-acid sequence, 430 residues long: Lipoyl synthase, mitochondrial (430 aa).

The transit peptide at 1–37 directs the protein to the mitochondrion; that stretch reads MATSAGKLRTLYSAHSSLSSLPPSARPTLQLATLRSY. Residues 39-55 show a composition bias toward polar residues; it reads TTTPHDSPIGNTSNTPP. Positions 39-59 are disordered; the sequence is TTTPHDSPIGNTSNTPPTVKR. Positions 141, 146, 152, 172, 176, 179, and 387 each coordinate [4Fe-4S] cluster. Positions 155-376 constitute a Radical SAM core domain; that stretch reads GSSKSAATAT…KERALEMGFL (222 aa).

It belongs to the radical SAM superfamily. Lipoyl synthase family. The cofactor is [4Fe-4S] cluster.

The protein localises to the mitochondrion. The catalysed reaction is [[Fe-S] cluster scaffold protein carrying a second [4Fe-4S](2+) cluster] + N(6)-octanoyl-L-lysyl-[protein] + 2 oxidized [2Fe-2S]-[ferredoxin] + 2 S-adenosyl-L-methionine + 4 H(+) = [[Fe-S] cluster scaffold protein] + N(6)-[(R)-dihydrolipoyl]-L-lysyl-[protein] + 4 Fe(3+) + 2 hydrogen sulfide + 2 5'-deoxyadenosine + 2 L-methionine + 2 reduced [2Fe-2S]-[ferredoxin]. It participates in protein modification; protein lipoylation via endogenous pathway; protein N(6)-(lipoyl)lysine from octanoyl-[acyl-carrier-protein]: step 2/2. In terms of biological role, catalyzes the radical-mediated insertion of two sulfur atoms into the C-6 and C-8 positions of the octanoyl moiety bound to the lipoyl domains of lipoate-dependent enzymes, thereby converting the octanoylated domains into lipoylated derivatives. This chain is Lipoyl synthase, mitochondrial, found in Ajellomyces capsulatus (strain H143) (Darling's disease fungus).